The following is a 677-amino-acid chain: Forkhead box protein P1 (677 aa).

Polar residues predominate over residues 1–18 (MMQESGTETKSNGSAIQN). Residues 1-43 (MMQESGTETKSNGSAIQNGSGGSNHLLECGGLREGRSNGETPA) form a disordered region. A Phosphoserine modification is found at Ser83. The span at 270-283 (IMNPHASTNGQLSV) shows a compositional bias: polar residues. Residues 270–298 (IMNPHASTNGQLSVHTPKRESLSHEEHPH) are disordered. The segment covering 286 to 298 (PKRESLSHEEHPH) has biased composition (basic and acidic residues). Residue Lys287 forms a Glycyl lysine isopeptide (Lys-Gly) (interchain with G-Cter in SUMO2) linkage. The C2H2-type zinc-finger motif lies at 306–331 (GVCKWPGCEAVCEDFQSFLKHLNSEH). The tract at residues 348-369 (VQQLELQLAKDKERLQAMMTHL) is leucine-zipper. Residues Lys372 and Lys377 each participate in a glycyl lysine isopeptide (Lys-Gly) (interchain with G-Cter in SUMO2) cross-link. The segment at 382–386 (PLNLV) is CTBP1-binding. The segment covering 390 to 403 (TLSKSASEASPQSL) has biased composition (polar residues). The segment at 390 to 422 (TLSKSASEASPQSLPHTPTTPTAPLTPVTQGPS) is disordered. Positions 404 to 418 (PHTPTTPTAPLTPVT) are enriched in low complexity. Lys442 is covalently cross-linked (Glycyl lysine isopeptide (Lys-Gly) (interchain with G-Cter in SUMO2)). Residues 465 to 555 (RPPFTYASLI…PQKISGNPSL (91 aa)) constitute a DNA-binding region (fork-head). The disordered stretch occupies residues 611–677 (EHTNSNESDS…EDEPVNEDME (67 aa)). The span at 612–623 (HTNSNESDSSPG) shows a compositional bias: polar residues. Phosphothreonine is present on Thr653. At Ser658 the chain carries Phosphoserine. Acidic residues predominate over residues 667–677 (YEDEPVNEDME).

In terms of assembly, forms homodimers and heterodimers with FOXP2 and FOXP4. Dimerization is required for DNA-binding. Self-associates. Interacts with CTBP1. Interacts with NCOR2 and AR. Interacts with FOXP2. Interacts with TBR1. Interacts with AURKA; this interaction facilitates the phosphorylation of FOXP1, which suppresses the expression of FBXL7. Interacts with ZMYM2. In terms of tissue distribution, isoform 8 is specifically expressed in embryonic stem cells.

Its subcellular location is the nucleus. Functionally, transcriptional repressor. Can act with CTBP1 to synergistically repress transcription but CTPBP1 is not essential. Plays an important role in the specification and differentiation of lung epithelium. Acts cooperatively with FOXP4 to regulate lung secretory epithelial cell fate and regeneration by restricting the goblet cell lineage program; the function may involve regulation of AGR2. Essential transcriptional regulator of B-cell development. Involved in regulation of cardiac muscle cell proliferation. Involved in the columnar organization of spinal motor neurons. Promotes the formation of the lateral motor neuron column (LMC) and the preganglionic motor column (PGC) and is required for respective appropriate motor axon projections. The segment-appropriate generation of spinal cord motor columns requires cooperation with other Hox proteins. Can regulate PITX3 promoter activity; may promote midbrain identity in embryonic stem cell-derived dopamine neurons by regulating PITX3. Negatively regulates the differentiation of T follicular helper cells T(FH)s. Involved in maintenance of hair follicle stem cell quiescence; the function probably involves regulation of FGF18. Represses transcription of various pro-apoptotic genes and cooperates with NF-kappa B-signaling in promoting B-cell expansion by inhibition of caspase-dependent apoptosis. Binds to CSF1R promoter elements and is involved in regulation of monocyte differentiation and macrophage functions; repression of CSF1R in monocytes seems to involve NCOR2 as corepressor. Involved in endothelial cell proliferation, tube formation and migration indicative for a role in angiogenesis; the role in neovascularization seems to implicate suppression of SEMA5B. Can negatively regulate androgen receptor signaling. Acts as a transcriptional activator of the FBXL7 promoter; this activity is regulated by AURKA. Involved in transcriptional regulation in embryonic stem cells (ESCs). Stimulates expression of transcription factors that are required for pluripotency and decreases expression of differentiation-associated genes. Has distinct DNA-binding specifities as compared to the canonical form and preferentially binds DNA with the sequence 5'-CGATACAA-3' (or closely related sequences). Promotes ESC self-renewal and pluripotency. The sequence is that of Forkhead box protein P1 (FOXP1) from Homo sapiens (Human).